We begin with the raw amino-acid sequence, 166 residues long: Large ribosomal subunit protein uL10 (166 aa).

The protein belongs to the universal ribosomal protein uL10 family. As to quaternary structure, part of the ribosomal stalk of the 50S ribosomal subunit. The N-terminus interacts with L11 and the large rRNA to form the base of the stalk. The C-terminus forms an elongated spine to which L12 dimers bind in a sequential fashion forming a multimeric L10(L12)X complex.

Forms part of the ribosomal stalk, playing a central role in the interaction of the ribosome with GTP-bound translation factors. The sequence is that of Large ribosomal subunit protein uL10 from Pelagibacter ubique (strain HTCC1062).